Here is a 307-residue protein sequence, read N- to C-terminus: Glutaminase (307 aa).

Serine 66, asparagine 117, glutamate 161, asparagine 168, tyrosine 192, tyrosine 243, and valine 261 together coordinate substrate.

It belongs to the glutaminase family. As to quaternary structure, homotetramer.

The enzyme catalyses L-glutamine + H2O = L-glutamate + NH4(+). This is Glutaminase from Serratia proteamaculans (strain 568).